The sequence spans 237 residues: MDSFLRLLIHGASGRMGQSLLRLASEDPSFQVTAAVVGNAPHRHVSDGVPFFAAAELAAVPAFDVAIDFSLPQGFSSLLALCVARAVPLVSGTTGLDSRQHEALVMAGARIPLVWGSNFSVGMAALVNLVERAGDALSGWDCDIVESHHVHKQDAPSGSALTLGEAVACKGIAPRYTSLRAGDIVGDHLVQFTGLGERIELVHRATNRDVFARGALCVARRVVGRVPGCYRVRDLIM.

NAD(+) contacts are provided by residues 11–16 (GASGRM), 92–94 (GTT), and 116–119 (GSNF). Histidine 148 serves as the catalytic Proton donor/acceptor. Histidine 149 serves as a coordination point for (S)-2,3,4,5-tetrahydrodipicolinate. Catalysis depends on lysine 152, which acts as the Proton donor. Position 158–159 (158–159 (GS)) interacts with (S)-2,3,4,5-tetrahydrodipicolinate.

It belongs to the DapB family.

It localises to the cytoplasm. The catalysed reaction is (S)-2,3,4,5-tetrahydrodipicolinate + NAD(+) + H2O = (2S,4S)-4-hydroxy-2,3,4,5-tetrahydrodipicolinate + NADH + H(+). It catalyses the reaction (S)-2,3,4,5-tetrahydrodipicolinate + NADP(+) + H2O = (2S,4S)-4-hydroxy-2,3,4,5-tetrahydrodipicolinate + NADPH + H(+). It participates in amino-acid biosynthesis; L-lysine biosynthesis via DAP pathway; (S)-tetrahydrodipicolinate from L-aspartate: step 4/4. Its function is as follows. Catalyzes the conversion of 4-hydroxy-tetrahydrodipicolinate (HTPA) to tetrahydrodipicolinate. The polypeptide is 4-hydroxy-tetrahydrodipicolinate reductase (Xylella fastidiosa (strain M12)).